A 447-amino-acid polypeptide reads, in one-letter code: Phosphoglucosamine mutase (447 aa).

Ser-103 functions as the Phosphoserine intermediate in the catalytic mechanism. Positions 103, 242, 244, and 246 each coordinate Mg(2+). Ser-103 is modified (phosphoserine).

The protein belongs to the phosphohexose mutase family. Requires Mg(2+) as cofactor. Activated by phosphorylation.

The enzyme catalyses alpha-D-glucosamine 1-phosphate = D-glucosamine 6-phosphate. Functionally, catalyzes the conversion of glucosamine-6-phosphate to glucosamine-1-phosphate. This is Phosphoglucosamine mutase from Jannaschia sp. (strain CCS1).